A 149-amino-acid polypeptide reads, in one-letter code: Nucleoside diphosphate kinase (149 aa).

ATP-binding residues include Lys9, Phe57, Arg85, Thr91, Arg102, and Asn112. The active-site Pros-phosphohistidine intermediate is the His115.

The protein belongs to the NDK family. As to quaternary structure, homotetramer. Requires Mg(2+) as cofactor.

The protein resides in the cytoplasm. The catalysed reaction is a 2'-deoxyribonucleoside 5'-diphosphate + ATP = a 2'-deoxyribonucleoside 5'-triphosphate + ADP. It catalyses the reaction a ribonucleoside 5'-diphosphate + ATP = a ribonucleoside 5'-triphosphate + ADP. Functionally, major role in the synthesis of nucleoside triphosphates other than ATP. The ATP gamma phosphate is transferred to the NDP beta phosphate via a ping-pong mechanism, using a phosphorylated active-site intermediate. This is Nucleoside diphosphate kinase from Crocosphaera subtropica (strain ATCC 51142 / BH68) (Cyanothece sp. (strain ATCC 51142)).